Consider the following 479-residue polypeptide: MISMTKTVYIKTVGCQMNVLDSEMVIADLKRHGYTVVDTPGEADLLLYNTCSIREQAEEKTYSALGKLKETKARHPEKTIGVMGCMAQKDQETIFRRAPFVDMVVGPGQLHAIPDMLTKVTSGEGRQMAVSLGRKDGKQTVVARSHETFDPLRDPTMRPTPFQAYLRIQIGCDKFCTYCVVPNTRGPEQGRSPEEIVSEARVLAEQGALEITLLGQTVNSYRHRGPDGETDMAGLLERLHDIDGLKRIKFVTNYPKDMTARLLETIRDLPKVSPYLHVPAQSGSDAVLKRMKRGYTIADYMEMFERIETVLPEASVSSDFIVGFCGETDEDFQKSVKLIERCRFKNSFIFQYSVREGTKAAANLIDDVPREVKAARNNELLAVQDRISKEDNQKLIGDTVEVLVEGPSKKADKSDLDAPIVQMTGRTICDRIVVFDGNRRQAGQLMDIQIDDVSSHTLIGRVKTVEVVSLGMPGLAPSS.

An MTTase N-terminal domain is found at 6 to 122; it reads KTVYIKTVGC…IPDMLTKVTS (117 aa). Cys15, Cys51, Cys85, Cys172, Cys176, and Cys179 together coordinate [4Fe-4S] cluster. In terms of domain architecture, Radical SAM core spans 158–390; sequence RPTPFQAYLR…LAVQDRISKE (233 aa). The 72-residue stretch at 393 to 464 folds into the TRAM domain; sequence QKLIGDTVEV…SHTLIGRVKT (72 aa).

This sequence belongs to the methylthiotransferase family. MiaB subfamily. Monomer. The cofactor is [4Fe-4S] cluster.

The protein localises to the cytoplasm. The enzyme catalyses N(6)-dimethylallyladenosine(37) in tRNA + (sulfur carrier)-SH + AH2 + 2 S-adenosyl-L-methionine = 2-methylsulfanyl-N(6)-dimethylallyladenosine(37) in tRNA + (sulfur carrier)-H + 5'-deoxyadenosine + L-methionine + A + S-adenosyl-L-homocysteine + 2 H(+). Catalyzes the methylthiolation of N6-(dimethylallyl)adenosine (i(6)A), leading to the formation of 2-methylthio-N6-(dimethylallyl)adenosine (ms(2)i(6)A) at position 37 in tRNAs that read codons beginning with uridine. The polypeptide is tRNA-2-methylthio-N(6)-dimethylallyladenosine synthase (Rhodopirellula baltica (strain DSM 10527 / NCIMB 13988 / SH1)).